Reading from the N-terminus, the 66-residue chain is Large ribosomal subunit protein bL35 (66 aa).

Residues 1 to 14 (MPKMKTKSAAKKRF) are compositionally biased toward basic residues. Residues 1–34 (MPKMKTKSAAKKRFSMTATGKVKAGPAGKRHGMI) are disordered.

Belongs to the bacterial ribosomal protein bL35 family.

The chain is Large ribosomal subunit protein bL35 from Paracoccus denitrificans (strain Pd 1222).